The sequence spans 544 residues: Chaperonin GroEL 1 (544 aa).

ATP-binding positions include 29-32, 86-90, G413, 476-478, and D492; these read TLGP, DGTTT, and NAA. The interval 523-544 is disordered; sequence EPVKAPAGGGDMDGMGGMGGMM. Residues 529–544 show a composition bias toward gly residues; the sequence is AGGGDMDGMGGMGGMM.

The protein belongs to the chaperonin (HSP60) family. Forms a cylinder of 14 subunits composed of two heptameric rings stacked back-to-back. Interacts with the co-chaperonin GroES.

It is found in the cytoplasm. The catalysed reaction is ATP + H2O + a folded polypeptide = ADP + phosphate + an unfolded polypeptide.. In terms of biological role, together with its co-chaperonin GroES, plays an essential role in assisting protein folding. The GroEL-GroES system forms a nano-cage that allows encapsulation of the non-native substrate proteins and provides a physical environment optimized to promote and accelerate protein folding. The sequence is that of Chaperonin GroEL 1 from Cutibacterium acnes (strain DSM 16379 / KPA171202) (Propionibacterium acnes).